Here is a 2542-residue protein sequence, read N- to C-terminus: Highly reducing polyketide synthase (2542 aa).

One can recognise a Ketosynthase family 3 (KS3) domain in the interval 7–435; it reads PEPIAIVGMA…GANAHAILDA (429 aa). Active-site for beta-ketoacyl synthase activity residues include C182, H317, and H357. Residues 545–872 enclose the Malonyl-CoA:ACP transacylase (MAT) domain; that stretch reads FVFTGQGAQW…NLVGSLFLSG (328 aa). An N-terminal hotdog fold region spans residues 927 to 1062; it reads HDLLGSRIPG…TTNETLRINS (136 aa). The region spanning 927–1224 is the PKS/mFAS DH domain; it reads HDLLGSRIPG…FLSLETATKE (298 aa). Catalysis depends on H959, which acts as the Proton acceptor; for dehydratase activity. Residues 1072-1224 are C-terminal hotdog fold; the sequence is NKDSYVRRWY…FLSLETATKE (153 aa). D1137 (proton donor; for dehydratase activity) is an active-site residue. A methyltransferase (CMet) domain region spans residues 1275–1574; the sequence is LTQLAIRSVV…AGADIMLDDY (300 aa). Positions 1606 to 1634 are disordered; sequence VNGTNGINSTNSVNVTNDTSGINDTNRMN. Residues 1866-2186 enclose the Enoyl reductase (ER) domain; sequence GKANSFYFES…QGDSVGSVVL (321 aa). The 181-residue stretch at 2209–2389 folds into the Ketoreductase (KR) domain; it reads ASYLLVGCLG…QAMSMALGMI (181 aa).

Pantetheine 4'-phosphate serves as cofactor.

Its pathway is antifungal biosynthesis. Its function is as follows. Highly reducing polyketide synthase; part of the gene cluster that mediates the biosynthesis of the tetrahydropyranyl antifungal agent lanomycin that acts as an inhibitor of CYP51 and blocks the ergosterol biosynthesis. The biosynthesis probably begins with the formation of an hexaketide, followed by methionine mediated alkylation of C-2 and C-6, and methylation of the reduced C-3 oxygen, pyran forming reductive ring closure, oxygenation of C-4, beta-keto reduction, enoyl reduction and dehydration of the remaining oxygens, and finally, acylation with glycine to complete the biosynthesis. The chain is Highly reducing polyketide synthase from Pyrenophora dematioidea (Helminthosporium dematioideum).